The chain runs to 250 residues: tRNA pseudouridine synthase A (250 aa).

The Nucleophile role is filled by aspartate 52. Residue tyrosine 111 coordinates substrate.

The protein belongs to the tRNA pseudouridine synthase TruA family. As to quaternary structure, homodimer.

It carries out the reaction uridine(38/39/40) in tRNA = pseudouridine(38/39/40) in tRNA. Its function is as follows. Formation of pseudouridine at positions 38, 39 and 40 in the anticodon stem and loop of transfer RNAs. In Methylorubrum extorquens (strain CM4 / NCIMB 13688) (Methylobacterium extorquens), this protein is tRNA pseudouridine synthase A.